The primary structure comprises 126 residues: Translation initiation factor 5A (126 aa).

Lys36 carries the post-translational modification Hypusine.

It belongs to the eIF-5A family.

The protein localises to the cytoplasm. In terms of biological role, functions by promoting the formation of the first peptide bond. The chain is Translation initiation factor 5A from Haloarcula marismortui (strain ATCC 43049 / DSM 3752 / JCM 8966 / VKM B-1809) (Halobacterium marismortui).